A 469-amino-acid chain; its full sequence is Citrate synthase, mitochondrial (469 aa).

The transit peptide at 1 to 30 (MSFLTVSRLAPKLLNSKNATYFLVAARNAS) directs the protein to the mitochondrion. Active-site residues include histidine 304 and histidine 350. Oxaloacetate is bound at residue arginine 359. Residue aspartate 405 is part of the active site. Oxaloacetate contacts are provided by arginine 431 and arginine 451.

It belongs to the citrate synthase family. In terms of assembly, homodimer.

It is found in the mitochondrion matrix. It carries out the reaction oxaloacetate + acetyl-CoA + H2O = citrate + CoA + H(+). Its pathway is carbohydrate metabolism; tricarboxylic acid cycle; isocitrate from oxaloacetate: step 1/2. In terms of biological role, key enzyme of the Krebs tricarboxylic acid cycle which catalyzes the synthesis of citrate from acetyl coenzyme A and oxaloacetate. In Kajikia audax (Striped marlin), this protein is Citrate synthase, mitochondrial (cs).